We begin with the raw amino-acid sequence, 266 residues long: Nickel import ATP-binding protein NikE (266 aa).

In terms of domain architecture, ABC transporter spans 4–252 (ISADNIVKIY…RHPASRLLRE (249 aa)). ATP is bound at residue 45-52 (GRSGCGKS).

This sequence belongs to the ABC transporter superfamily. Nickel importer (TC 3.A.1.5.3) family. In terms of assembly, the complex is composed of two ATP-binding proteins (NikD and NikE), two transmembrane proteins (NikB and NikC) and a solute-binding protein (NikA).

It localises to the cell inner membrane. The catalysed reaction is Ni(2+)(out) + ATP + H2O = Ni(2+)(in) + ADP + phosphate + H(+). Functionally, part of the ABC transporter complex NikABCDE involved in nickel import. Responsible for energy coupling to the transport system. The polypeptide is Nickel import ATP-binding protein NikE (Brucella abortus (strain 2308)).